Reading from the N-terminus, the 296-residue chain is Probable alpha-L-glutamate ligase (296 aa).

In terms of domain architecture, ATP-grasp spans 104-287; the sequence is LQLLARQGID…IATLMITFIE (184 aa). ATP-binding positions include K141, 178-179, D187, and 211-213; these read EF and RSN. Residues D248, E260, and N262 each contribute to the Mg(2+) site. Positions 248, 260, and 262 each coordinate Mn(2+).

This sequence belongs to the RimK family. It depends on Mg(2+) as a cofactor. Requires Mn(2+) as cofactor.

This Sodalis glossinidius (strain morsitans) protein is Probable alpha-L-glutamate ligase.